Here is a 448-residue protein sequence, read N- to C-terminus: tRNA-2-methylthio-N(6)-dimethylallyladenosine synthase (448 aa).

The MTTase N-terminal domain occupies 7–123 (RSFYIHTFGC…LPALIGDAEE (117 aa)). [4Fe-4S] cluster contacts are provided by cysteine 16, cysteine 52, cysteine 86, cysteine 159, cysteine 163, and cysteine 166. The Radical SAM core domain occupies 145-375 (REVGVGAFVP…IDLQLSISAE (231 aa)). The TRAM domain maps to 378–441 (QEAVGSVVDV…SATLTGVNQG (64 aa)).

The protein belongs to the methylthiotransferase family. MiaB subfamily. Monomer. The cofactor is [4Fe-4S] cluster.

It localises to the cytoplasm. The catalysed reaction is N(6)-dimethylallyladenosine(37) in tRNA + (sulfur carrier)-SH + AH2 + 2 S-adenosyl-L-methionine = 2-methylsulfanyl-N(6)-dimethylallyladenosine(37) in tRNA + (sulfur carrier)-H + 5'-deoxyadenosine + L-methionine + A + S-adenosyl-L-homocysteine + 2 H(+). In terms of biological role, catalyzes the methylthiolation of N6-(dimethylallyl)adenosine (i(6)A), leading to the formation of 2-methylthio-N6-(dimethylallyl)adenosine (ms(2)i(6)A) at position 37 in tRNAs that read codons beginning with uridine. The polypeptide is tRNA-2-methylthio-N(6)-dimethylallyladenosine synthase (Chlorobium phaeovibrioides (strain DSM 265 / 1930) (Prosthecochloris vibrioformis (strain DSM 265))).